The primary structure comprises 345 residues: Uroporphyrinogen decarboxylase (345 aa).

Residues 26–30 (RQAGR), F45, D75, Y151, S206, and H320 contribute to the substrate site.

This sequence belongs to the uroporphyrinogen decarboxylase family. As to quaternary structure, homodimer.

The protein localises to the cytoplasm. The enzyme catalyses uroporphyrinogen III + 4 H(+) = coproporphyrinogen III + 4 CO2. The protein operates within porphyrin-containing compound metabolism; protoporphyrin-IX biosynthesis; coproporphyrinogen-III from 5-aminolevulinate: step 4/4. Functionally, catalyzes the decarboxylation of four acetate groups of uroporphyrinogen-III to yield coproporphyrinogen-III. In Staphylococcus carnosus (strain TM300), this protein is Uroporphyrinogen decarboxylase.